Here is a 994-residue protein sequence, read N- to C-terminus: NACHT, LRR and PYD domains-containing protein 4 (994 aa).

Residues 1 to 94 form the Pyrin domain; sequence MAASFFSDFG…CMKVMRERTG (94 aa). The region spanning 149–472 is the NACHT domain; sequence RTVIIQGPQG…FYLLKSHLDH (324 aa). 155 to 162 contacts ATP; sequence GPQGIGKT. LRR repeat units lie at residues 637 to 660, 698 to 721, 722 to 745, 750 to 777, 806 to 833, 863 to 886, 920 to 943, and 949 to 972; these read SGHL…TWCN, YLSF…LNYP, AGNV…VLAG, NKKL…LCSP, NKSV…ALKH, NQNL…LLCR, SKTL…VLCE, and ECAL…LLTA.

It belongs to the NLRP family. As to quaternary structure, interacts with CHUK/IKKA, inhibiting its kinase activity.

In terms of biological role, may be involved in inflammation and recognition of cytosolic pathogen-associated molecular patterns (PAMPs) not intercepted by membrane-bound receptors. Acts as a negative regulator of the type I interferon signaling pathway by serving as an adapter to promote DTX4-mediated ubiquitination of activated TBK1, and its subsequent degradation. Suppresses NF-kappaB induction by the cytokines TNFA and IL1B, suggesting that it operates at a point of convergence in these two cytokine signaling pathways. The sequence is that of NACHT, LRR and PYD domains-containing protein 4 from Homo sapiens (Human).